Reading from the N-terminus, the 152-residue chain is Bacchus (152 aa).

Residues 29-41 (DLKAKAAAEDKAA) show a composition bias toward basic and acidic residues. The interval 29–152 (DLKAKAAAED…DDGSGSDDQA (124 aa)) is disordered. Low complexity predominate over residues 42–51 (AADAAGDAAD). Positions 72 to 89 (ESVKGTKRPAEAKSAESK) are enriched in basic and acidic residues. Over residues 99–152 (GDSDEEEALEEIIEGDSEIESDEYDIPYDGEEDDIECDDDDDDNDDGSGSDDQA) the composition is skewed to acidic residues.

Expressed in the brain.

It localises to the nucleus. Functionally, negatively regulates tyramine beta-hydroxylase tbh and thus the conversion of tyramine (TA) to octopamine (OA). In tyrosine decarboxylase 2 (Tdc2) neurons, acts in an amine-mediated signaling pathway to negatively regulate acute ethanol sensitivity probably via tbh-mediated depletion of TA. This Drosophila melanogaster (Fruit fly) protein is Bacchus.